The primary structure comprises 574 residues: K(+)/H(+) antiporter NhaP2 (574 aa).

13 helical membrane passes run 6-26, 34-54, 58-78, 87-107, 109-129, 173-193, 196-216, 219-239, 242-262, 271-291, 299-319, 335-355, and 359-379; these read INSFFLIGALLAAVSVLLSPV, ILLIFLAVGILAGEDGPGGIL, YSTAYLVSNLALAIILLDGGM, VALWPALSLATFGVAITTSIT, VMAAWLFDLHWLQGLLVGAIV, IAILGNVDAELSASFMLISFI, FGLGIFLGLGGGWLLWKLVNL, LAEGLYSILVLSGGLMIYAAS, LGGSGILSIYLVGLFLGNKPT, VLDGMTWVSQIGMFLVLGLLL, IWLPGLALAFGMILFARPLAV, WFISWVGLRGAVPIILAVFPM, and LPGAQLYFNLAFFVVLVSLLV. Residues 405–486 form the RCK C-terminal domain; it reads SGVEIYPSSE…LEALSNLFSQ (82 aa).

It belongs to the monovalent cation:proton antiporter 1 (CPA1) transporter (TC 2.A.36) family. NhaP2 subfamily.

It localises to the cell inner membrane. The catalysed reaction is K(+)(in) + H(+)(out) = K(+)(out) + H(+)(in). Functionally, k(+)/H(+) antiporter that extrudes potassium in exchange for external protons and maintains the internal concentration of potassium under toxic levels. The polypeptide is K(+)/H(+) antiporter NhaP2 (Shewanella sp. (strain MR-7)).